A 37-amino-acid polypeptide reads, in one-letter code: Large ribosomal subunit protein bL36 (37 aa).

The protein belongs to the bacterial ribosomal protein bL36 family.

The chain is Large ribosomal subunit protein bL36 from Mycobacterium ulcerans (strain Agy99).